The following is a 1141-amino-acid chain: Envelopment polyprotein (1141 aa).

Positions Met1 to Thr19 are cleaved as a signal peptide. Over Arg20 to Thr489 the chain is Lumenal. 6 disulfide bridges follow: Cys29–Cys154, Cys63–Cys160, Cys112–Cys131, Cys136–Cys141, Cys178–Cys188, and Cys213–Cys252. An N-linked (GlcNAc...) asparagine; by host glycan is attached at Asn137. N-linked (GlcNAc...) asparagine; by host glycosylation is present at Asn352. 4 disulfides stabilise this stretch: Cys381/Cys440, Cys385/Cys394, Cys410/Cys429, and Cys457/Cys480. N-linked (GlcNAc...) asparagine; by host glycosylation is present at Asn404. The chain crosses the membrane as a helical span at residues Ile490–Ile510. Residues Ile511–Cys632 lie on the Cytoplasmic side of the membrane. The interval Cys521–Lys538 is binding to the ribonucleoprotein. 2 CCHC-type zinc fingers span residues Cys550–Cys570 and Cys575–Cys596. 3 binding to the ribonucleoprotein regions span residues Phe593–Leu610, Lys597–Lys608, and Lys616–Ser630. Residues Thr612 to Ala653 form an inhibition of interferon induction region. In terms of domain architecture, ITAM spans Lys616–Cys639. Tyr620 and Tyr633 each carry phosphotyrosine. The short motif at Tyr620–Leu623 is the YxxL element. Residues Tyr633 to Ala653 traverse the membrane as a helical segment. Residues Glu654–Asn1109 are Lumenal-facing. Intrachain disulfides connect Cys740-Cys775, Cys744-Cys782, Cys756-Cys889, Cys770-Cys900, Cys785-Cys908, Cys811-Cys820, Cys828-Cys837, and Cys868-Cys872. The tract at residues Phe762–Cys782 is fusion loop. N-linked (GlcNAc...) asparagine; by host glycosylation is present at Asn932. 5 disulfide bridges follow: Cys974–Cys1004, Cys997–Cys1049, Cys1014–Cys1019, Cys1050–Cys1055, and Cys1089–Cys1093. A helical membrane pass occupies residues Trp1110 to Cys1130. The tract at residues Leu1126–Lys1141 is binding to the ribonucleoprotein. Over Cys1131–Lys1141 the chain is Cytoplasmic.

Belongs to the hantavirus envelope glycoprotein family. Homodimer. Homotetramer; forms heterotetrameric Gn-Gc spikes in the pre-fusion conformation. Interacts (via C-terminus) with the nucleoprotein. Interacts with host TUFM; this interaction contributes to the virus-induced degradation of mitochondria by autophagy, which leads to degradation of host MAVS and inhibition of type I interferon (IFN) responses. Interacts with host MAP1LC3B; this interaction contributes to the virus-induced degradation of mitochondria by autophagy, which leads to degradation of host MAVS and inhibition of type I interferon (IFN) responses. In terms of assembly, homodimer. Homotetramer; forms heterotetrameric Gn-Gc spikes in the pre-fusion conformation. Homotrimer; forms homotrimer in the post-fusion conformation at acidic pH. Interacts (via C-terminus) with the nucleoprotein. Envelope polyprotein precursor is quickly cleaved in vivo just after synthesis, presumably by host signal peptidase.

The protein resides in the virion membrane. It is found in the host cell surface. Its subcellular location is the host Golgi apparatus membrane. The protein localises to the host endoplasmic reticulum membrane. It localises to the host mitochondrion. Forms homotetramers with glycoprotein C at the surface of the virion. Attaches the virion to host cell receptors including integrin alpha5/ITGB1. This attachment induces virion internalization predominantly through clathrin-dependent endocytosis. Mediates the assembly and budding of infectious virus particles through its interaction with the nucleocapsid protein and the viral genome. May dysregulate normal immune and endothelial cell responses through an ITAM motif. Translocates to mitochondria, binds to host TUFM and recruits MAP1LC3B. These interactions induce mitochondrial autophagy and therefore destruction of host MAVS leading to inhibition of type I interferon (IFN) responses. Concomitant breakdown of glycoprotein N is apparently prevented by the nucleoprotein that may inhibit Gn-stimulated autophagosome-lysosome fusion. Interacts with the viral genomic RNA. Inhibits the host RIG-I/TBK1 pathway by disrupting the formation of TBK1-TRAF3 complexes and downstream signaling responses required for IFN-beta transcription. Its function is as follows. Forms homotetramers with glycoprotein N at the surface of the virion. Attaches the virion to host cell receptors including integrin ITGAV/ITGB3. This attachment induces virion internalization predominantly through clathrin-dependent endocytosis. Class II fusion protein that promotes fusion of viral membrane with host endosomal membrane after endocytosis of the virion. The sequence is that of Envelopment polyprotein (GP) from Tula orthohantavirus (TULV).